The sequence spans 417 residues: Serpin H1 (417 aa).

Residues 1-18 (MRSLLLLSAFCLLEAALA) form the signal peptide. At Lys94 the chain carries N6-succinyllysine. N-linked (GlcNAc...) asparagine glycosylation is found at Asn120 and Asn125. The residue at position 141 (Ser141) is a Phosphoserine. Residue Lys206 is modified to N6-acetyllysine. An N6-succinyllysine modification is found at Lys295. Lys318 is subject to N6-acetyllysine. The Prevents secretion from ER motif lies at 414-417 (RDEL).

It belongs to the serpin family.

The protein localises to the endoplasmic reticulum lumen. Binds specifically to collagen. Could be involved as a chaperone in the biosynthetic pathway of collagen. The chain is Serpin H1 (SERPINH1) from Pongo abelii (Sumatran orangutan).